Here is a 356-residue protein sequence, read N- to C-terminus: Phosphoribosylformylglycinamidine cyclo-ligase (356 aa).

The protein belongs to the AIR synthase family.

Its subcellular location is the cytoplasm. It catalyses the reaction 2-formamido-N(1)-(5-O-phospho-beta-D-ribosyl)acetamidine + ATP = 5-amino-1-(5-phospho-beta-D-ribosyl)imidazole + ADP + phosphate + H(+). It functions in the pathway purine metabolism; IMP biosynthesis via de novo pathway; 5-amino-1-(5-phospho-D-ribosyl)imidazole from N(2)-formyl-N(1)-(5-phospho-D-ribosyl)glycinamide: step 2/2. This Acinetobacter baumannii (strain AB307-0294) protein is Phosphoribosylformylglycinamidine cyclo-ligase.